We begin with the raw amino-acid sequence, 1025 residues long: Multidrug resistance protein MdtC (1025 aa).

12 helical membrane passes run 3-23 (FFALFIYRPVATILIAVAITL), 333-353 (EVEQTLVISIALVILVVFLFL), 360-380 (LIPAVAVPVSLIGTFAAMYLC), 387-407 (LSLMALTIATGFVVDDAIVVL), 431-451 (VGFTVLSMSVSLVAVFLPLLL), 463-483 (FAVTLSVAIGISLVISLTLTP), 528-548 (IVGLVLVGTIALNVWMYITIP), 853-873 (VILILAAIATVYIVLGILYES), 875-895 (VHPLTILSTLPSAGVGALLAL), 897-917 (LFDAPFSLIALIGIMLLIGIV), 953-973 (PIMMTTLAALFGALPLVISSG), and 984-1004 (ITIVGGLAMSQLLTLYTTPVV).

This sequence belongs to the resistance-nodulation-cell division (RND) (TC 2.A.6) family. MdtC subfamily. In terms of assembly, part of a tripartite efflux system composed of MdtA, MdtB and MdtC. MdtC forms a heteromultimer with MdtB.

It is found in the cell inner membrane. The sequence is that of Multidrug resistance protein MdtC from Enterobacter sp. (strain 638).